The chain runs to 156 residues: Ribosomal RNA large subunit methyltransferase H (156 aa).

S-adenosyl-L-methionine-binding positions include Leu-72, Gly-104, and Leu-123–Trp-128.

It belongs to the RNA methyltransferase RlmH family. Homodimer.

The protein localises to the cytoplasm. It carries out the reaction pseudouridine(1915) in 23S rRNA + S-adenosyl-L-methionine = N(3)-methylpseudouridine(1915) in 23S rRNA + S-adenosyl-L-homocysteine + H(+). Specifically methylates the pseudouridine at position 1915 (m3Psi1915) in 23S rRNA. This Roseobacter denitrificans (strain ATCC 33942 / OCh 114) (Erythrobacter sp. (strain OCh 114)) protein is Ribosomal RNA large subunit methyltransferase H.